The chain runs to 2424 residues: Voltage-dependent P/Q-type calcium channel subunit alpha-1A (2424 aa).

At 1-98 (MARFGDEMPA…KYAKKITEWP (98 aa)) the chain is on the cytoplasmic side. Residues 85 to 363 (NVVRKYAKKI…LVLGVLSGEF (279 aa)) form an I repeat. The helical transmembrane segment at 99–117 (PFEYMILATIIANCIVLAL) threads the bilayer. Over 118–135 (EQHLPDDDKTPMSERLDD) the chain is Extracellular. The helical transmembrane segment at 136 to 155 (TEPYFIGIFCFEAGIKIIAL) threads the bilayer. At 156-167 (GFAFHKGSYLRN) the chain is on the cytoplasmic side. Residues 168–185 (GWNVMDFVVVLTGILATV) form a helical membrane-spanning segment. The Extracellular portion of the chain corresponds to 186-190 (GTEFD). A helical transmembrane segment spans residues 191–209 (LRTLRAVRVLRPLKLVSGI). Residues 210–228 (PSLQVVLKSIMKAMIPLLQ) lie on the Cytoplasmic side of the membrane. The helical transmembrane segment at 229–248 (IGLLLFFAILIFAIIGLEFY) threads the bilayer. Residues 249-335 (MGKFHTTCFE…NSNDASGNTW (87 aa)) lie on the Extracellular side of the membrane. N283 carries an N-linked (GlcNAc...) asparagine glycan. E318 contributes to the Ca(2+) binding site. A helical transmembrane segment spans residues 336 to 360 (NWLYFIPLIIIGSFFMLNLVLGVLS). Residues 361 to 487 (GEFAKERERV…FYIRRMVKTQ (127 aa)) lie on the Cytoplasmic side of the membrane. The interval 383-400 (QQIERELNGYMEWISKAE) is binding to the beta subunit. Position 409 is a phosphothreonine (T409). Phosphoserine occurs at positions 448 and 451. The II repeat unit spans residues 473-717 (ERRMRFYIRR…VFLAIAVDNL (245 aa)). A helical transmembrane segment spans residues 488 to 506 (AFYWTVLSLVALNTLCVAI). At 507-521 (VHYNQPEWLSDFLYY) the chain is on the extracellular side. The chain crosses the membrane as a helical span at residues 522–541 (AEFIFLGLFMSEMFIKMYGL). Over 542–549 (GTRPYFHS) the chain is Cytoplasmic. A helical membrane pass occupies residues 550 to 568 (SFNCFDCGVIIGSIFEVIW). Topologically, residues 569-578 (AVIKPGTSFG) are extracellular. A helical membrane pass occupies residues 579 to 597 (ISVLRALRLLRIFKVTKYW). At 598–616 (ASLRNLVVSLLNSMKSIIS) the chain is on the cytoplasmic side. A helical transmembrane segment spans residues 617 to 636 (LLFLLFLFIVVFALLGMQLF). Residues 637–689 (GGQFNFDEGTPPTNFDTFPAAIMTVFQILTGEDWNEVMYDGIKSQGGVQGGMV) are Extracellular-facing. E668 is a binding site for Ca(2+). A helical transmembrane segment spans residues 690-714 (FSIYFIVLTLFGNYTLLNVFLAIAV). Residues 715–1253 (DNLANAQELT…RLCHYILNLR (539 aa)) lie on the Cytoplasmic side of the membrane. Phosphoserine occurs at positions 750, 753, and 790. Residues 819–1229 (HLDRPLVVDP…GEDGPKPMPP (411 aa)) are disordered. Basic and acidic residues-rich tracts occupy residues 893–912 (ELSR…REGG), 922–931 (EAERGKAGDP), and 969–996 (RPGE…RSGE). Residues 1053–1065 (PNLSTTRPIQQDL) show a composition bias toward polar residues. Residues S1091 and S1104 each carry the phosphoserine modification. Positions 1110 to 1140 (SSTDPAGPTPATAANPQNSTASRRTPNNPGN) are enriched in low complexity. Over residues 1151 to 1168 (ENSLIVTNPSTAQTNSAK) the composition is skewed to polar residues. Residues 1204-1214 (LPKKEDEKKEE) show a composition bias toward basic and acidic residues. Residues 1240–1523 (NPLRRLCHYI…IFVALIIITF (284 aa)) form an III repeat. A helical transmembrane segment spans residues 1254–1272 (YFEMCILMVIAMSSIALAA). At 1273–1288 (EDPVQPNAPRNNVLRY) the chain is on the extracellular side. Residues 1289–1308 (FDYVFTGVFTFEMVIKMIDL) form a helical membrane-spanning segment. Residues 1309–1320 (GLVLHQGAYFRD) are Cytoplasmic-facing. The helical transmembrane segment at 1321–1339 (LWNILDFIVVSGALVAFAF) threads the bilayer. Residues 1340–1350 (TGNSKGKDINT) are Extracellular-facing. Residues 1351-1369 (IKSLRVLRVLRPLKTIKRL) form a helical membrane-spanning segment. The Cytoplasmic segment spans residues 1370–1388 (PKLKAVFDCVVNSLKNVFN). Residues 1389-1408 (ILIVYMLFMFIFAVVAVQLF) traverse the membrane as a helical segment. Topologically, residues 1409–1495 (KGKFFHCTDE…QGPSPGYRME (87 aa)) are extracellular. E1469 provides a ligand contact to Ca(2+). Residues 1496 to 1520 (MSIFYVVYFVVFPFFFVNIFVALII) traverse the membrane as a helical segment. Residues 1521–1575 (ITFQEQGDKMMEEYSLEKNERACIDFAISAKPLTRHMPQNKQSFQYRMWQFVVSP) are Cytoplasmic-facing. Residues 1560–1823 (NKQSFQYRMW…LFVAVIMDNF (264 aa)) form an IV repeat. The helical transmembrane segment at 1576-1604 (PFEYTIMAMIALNTIVLMMKFYGASVAYD) threads the bilayer. The Extracellular portion of the chain corresponds to 1605 to 1609 (NALKV). Residues 1610–1629 (FNIVFTSLFSLECLLKVLAF) traverse the membrane as a helical segment. Over 1630–1637 (GILNYFRD) the chain is Cytoplasmic. A helical transmembrane segment spans residues 1638-1656 (AWNIFDFVTVLGSITDILV). The Extracellular portion of the chain corresponds to 1657–1665 (TEFGNNFIN). An N-linked (GlcNAc...) asparagine glycan is attached at N1665. A helical membrane pass occupies residues 1666–1684 (LSFLRLFRAARLIKLLRQG). The Cytoplasmic portion of the chain corresponds to 1685-1703 (YTIRILLWTFVQSFKALPY). Residues 1704 to 1723 (VCLLIAMLFFIYAIIGMQVF) traverse the membrane as a helical segment. Residues 1724–1795 (GNIGIDMEDE…ILTPECGNEF (72 aa)) are Extracellular-facing. The chain crosses the membrane as a helical span at residues 1796 to 1820 (AYFYFVSFIFLCSFLMLNLFVAVIM). Residues 1821–2424 (DNFEYLTRDS…GGPRASAPSP (604 aa)) are Cytoplasmic-facing. A Phosphothreonine modification is found at T1993. The disordered stretch occupies residues 1997–2424 (FQRMEPPPDE…GGPRASAPSP (428 aa)). Over residues 2037–2053 (SWVTQRAQEMFQKTGTW) the composition is skewed to polar residues. Phosphoserine is present on residues S2054, S2072, S2084, S2086, S2127, and S2148. Positions 2074 to 2090 (EMREMSQDGYSDSEHCL) are enriched in basic and acidic residues. 2 stretches are compositionally biased toward basic and acidic residues: residues 2142–2159 (RRLD…ENQR) and 2200–2210 (PSREREQERGR). Residues 2211 to 2229 (PKDRKHRPHHHHHHHHHPG) show a composition bias toward basic residues. Residues 2249–2262 (VARVRPARAPALAH) show a composition bias toward low complexity. Residues 2280–2305 (RRARRPRPRQRRRPRRRRGGGGRALR) show a composition bias toward basic residues.

Belongs to the calcium channel alpha-1 subunit (TC 1.A.1.11) family. CACNA1A subfamily. In terms of assembly, voltage-dependent calcium channels are multisubunit complexes, consisting of alpha-1, alpha-2, beta and delta subunits in a 1:1:1:1 ratio. The channel activity is directed by the pore-forming and voltage-sensitive alpha-1 subunit. In many cases, this subunit is sufficient to generate voltage-sensitive calcium channel activity. The auxiliary subunits beta and alpha-2/delta linked by a disulfide bridge regulate the channel activity. Interacts with CABP1. Interacts with the spider omega-agatoxin-IVA (AC P30288). Interacts with TSPOAP1. In terms of tissue distribution, brain specific. Purkinje cells contain predominantly P-type VSCC, the Q-type being a prominent calcium current in cerebellar granule cells.

It localises to the cell membrane. The catalysed reaction is Ca(2+)(in) = Ca(2+)(out). Its function is as follows. Voltage-sensitive calcium channels (VSCC) mediate the entry of calcium ions into excitable cells and are also involved in a variety of calcium-dependent processes, including muscle contraction, hormone or neurotransmitter release, gene expression, cell motility, cell division and cell death. The isoform alpha-1A gives rise to P and/or Q-type calcium currents. P/Q-type calcium channels belong to the 'high-voltage activated' (HVA) group and are specifically blocked by the spider omega-agatoxin-IVA (AC P54282). They are however insensitive to dihydropyridines (DHP). The protein is Voltage-dependent P/Q-type calcium channel subunit alpha-1A (CACNA1A) of Oryctolagus cuniculus (Rabbit).